The following is a 218-amino-acid chain: Ribose-5-phosphate isomerase A (218 aa).

Substrate contacts are provided by residues 28 to 31, 81 to 84, and 94 to 97; these read TGST, DGAD, and KGGG. Glu-103 serves as the catalytic Proton acceptor. A substrate-binding site is contributed by Lys-121.

This sequence belongs to the ribose 5-phosphate isomerase family. Homodimer.

It carries out the reaction aldehydo-D-ribose 5-phosphate = D-ribulose 5-phosphate. It participates in carbohydrate degradation; pentose phosphate pathway; D-ribose 5-phosphate from D-ribulose 5-phosphate (non-oxidative stage): step 1/1. Functionally, catalyzes the reversible conversion of ribose-5-phosphate to ribulose 5-phosphate. The protein is Ribose-5-phosphate isomerase A of Vibrio atlanticus (strain LGP32) (Vibrio splendidus (strain Mel32)).